The primary structure comprises 715 residues: Nucleolar complex protein 2 homolog (715 aa).

Disordered regions lie at residues 17 to 71 (SKRI…HKLD), 85 to 132 (FLQQ…DKTK), and 638 to 715 (ERSA…SDED). Residues 89-128 (EDADLLNMEDDGDDDEDDDEDDEDEEEEESDDDEDDEEDD) show a composition bias toward acidic residues. The segment covering 638–660 (ERSAVENSKKDDKKKKKEEEAAA) has biased composition (basic and acidic residues).

The protein belongs to the NOC2 family.

The protein localises to the nucleus. In terms of biological role, required for normal somatic gonad development and for regulation of germline development and proliferation. The polypeptide is Nucleolar complex protein 2 homolog (pro-2) (Caenorhabditis elegans).